A 474-amino-acid chain; its full sequence is PTS system N-acetylmuramic acid-specific EIIBC component (474 aa).

A PTS EIIB type-1 domain is found at 1–89 (MAKEISSELL…SELLGEAPVQ (89 aa)). Topologically, residues 1–123 (MAKEISSELL…LAKFATIFTP (123 aa)) are cytoplasmic. Cysteine 29 acts as the Phosphocysteine intermediate; for EIIB activity in catalysis. Residues 115–474 (AKFATIFTPL…LFGCRNVNLD (360 aa)) enclose the PTS EIIC type-1 domain. Residues 124 to 144 (LIPGFIAAGLLLGIATLIATV) traverse the membrane as a helical segment. The Periplasmic segment spans residues 145 to 157 (MHVPADAQGTLPD). Residues 158-178 (ALNFMKVFSKGLFTFLVILVG) form a helical membrane-spanning segment. Topologically, residues 179–180 (YN) are cytoplasmic. Residues 181–201 (AAQAFGGTGVNGAIIAALFLL) form a helical membrane-spanning segment. Topologically, residues 202-217 (GYNPAATTGYYAGFHD) are periplasmic. Residues 218 to 238 (FFGLPIDPRGNIIGVLIAAWA) form a helical membrane-spanning segment. Residues 239 to 260 (CARIEGMVRRFMPDDLDMLLTS) are Cytoplasmic-facing. A helical transmembrane segment spans residues 261 to 281 (LITLLITATLAYLIIMPLGGW). The Periplasmic portion of the chain corresponds to 282-301 (LFEGMSWLFMHLNSNPFGCA). The helical transmembrane segment at 302–322 (VLAGLFLIAVVFGVHQGFIPV) threads the bilayer. The Cytoplasmic portion of the chain corresponds to 323–334 (YLALMDSQGFNS). Residues 335–355 (LFPILSMAGAGQVGAALALYW) form a helical membrane-spanning segment. Residues 356 to 368 (RAQPHSALRSQVR) lie on the Periplasmic side of the membrane. A helical transmembrane segment spans residues 369–389 (GAIIPGLLGVGEPLIYGVTLP). At 390 to 393 (RMKP) the chain is on the cytoplasmic side. Residues 394 to 414 (FVTACLGGAAGGLFIGLIAWW) traverse the membrane as a helical segment. At 415-440 (GLPMGLNSAFGPSGLVALPLMTSAQG) the chain is on the periplasmic side. A helical transmembrane segment spans residues 441 to 461 (ILPAMAVYAGGILVAWVCGFI). The Cytoplasmic portion of the chain corresponds to 462–474 (FTTLFGCRNVNLD).

It localises to the cell inner membrane. The catalysed reaction is N-acetyl-beta-D-muramate(out) + N(pros)-phospho-L-histidyl-[protein] = N-acetyl-beta-D-muramate 6-phosphate(in) + L-histidyl-[protein]. Functionally, the phosphoenolpyruvate-dependent sugar phosphotransferase system (sugar PTS), a major carbohydrate active transport system, catalyzes the phosphorylation of incoming sugar substrates concomitantly with their translocation across the cell membrane. This system is involved in N-acetylmuramic acid (MurNAc) transport, yielding cytoplasmic MurNAc-6-P. Is responsible for growth on MurNAc as the sole source of carbon and energy. Is also able to take up anhydro-N-acetylmuramic acid (anhMurNAc), but cannot phosphorylate the carbon 6, probably because of the 1,6-anhydro ring. The protein is PTS system N-acetylmuramic acid-specific EIIBC component (murP) of Escherichia coli (strain K12).